We begin with the raw amino-acid sequence, 114 residues long: UPF0102 protein HPAG1_0809 (114 aa).

This sequence belongs to the UPF0102 family.

The polypeptide is UPF0102 protein HPAG1_0809 (Helicobacter pylori (strain HPAG1)).